The sequence spans 243 residues: UDP-2,3-diacylglucosamine hydrolase (243 aa).

Mn(2+) contacts are provided by Asp-8, His-10, Asp-41, Asn-79, and His-114. 79–80 (NR) is a binding site for substrate. Substrate is bound by residues Asp-122, Lys-164, Lys-167, and His-195. The Mn(2+) site is built by His-195 and His-197.

Belongs to the LpxH family. Mn(2+) serves as cofactor.

It localises to the cell inner membrane. The enzyme catalyses UDP-2-N,3-O-bis[(3R)-3-hydroxytetradecanoyl]-alpha-D-glucosamine + H2O = 2-N,3-O-bis[(3R)-3-hydroxytetradecanoyl]-alpha-D-glucosaminyl 1-phosphate + UMP + 2 H(+). It functions in the pathway glycolipid biosynthesis; lipid IV(A) biosynthesis; lipid IV(A) from (3R)-3-hydroxytetradecanoyl-[acyl-carrier-protein] and UDP-N-acetyl-alpha-D-glucosamine: step 4/6. Hydrolyzes the pyrophosphate bond of UDP-2,3-diacylglucosamine to yield 2,3-diacylglucosamine 1-phosphate (lipid X) and UMP by catalyzing the attack of water at the alpha-P atom. Involved in the biosynthesis of lipid A, a phosphorylated glycolipid that anchors the lipopolysaccharide to the outer membrane of the cell. This chain is UDP-2,3-diacylglucosamine hydrolase, found in Vibrio vulnificus (strain CMCP6).